The sequence spans 299 residues: UDP-N-acetylenolpyruvoylglucosamine reductase (299 aa).

Residues 28–193 (KVGGPADILA…LSAKFELQAG (166 aa)) enclose the FAD-binding PCMH-type domain. Arg-172 is an active-site residue. The active-site Proton donor is Ser-222. Glu-292 is a catalytic residue.

This sequence belongs to the MurB family. The cofactor is FAD.

Its subcellular location is the cytoplasm. It catalyses the reaction UDP-N-acetyl-alpha-D-muramate + NADP(+) = UDP-N-acetyl-3-O-(1-carboxyvinyl)-alpha-D-glucosamine + NADPH + H(+). It participates in cell wall biogenesis; peptidoglycan biosynthesis. Cell wall formation. This is UDP-N-acetylenolpyruvoylglucosamine reductase from Lactococcus lactis subsp. cremoris (strain SK11).